A 162-amino-acid chain; its full sequence is MRIAVYPGSFDPITNGHLDIIERAAELFDRLIVAIAKNPMKKPLFTLEERLDMLRETLKYYPNIEIDSFEGLTVNYLKAKNAQVIIRGLRAISDFENEFMMALTNKKLVPWVETIFLMTKAEYSFISSSAVKEVAMYGGCLKGLVPEYVELKLREKFQKEGC.

A substrate-binding site is contributed by Ser9. ATP-binding positions include 9-10 (SF) and His17. Lys41, Thr73, and Arg87 together coordinate substrate. ATP-binding positions include 88-90 (GLR), Glu98, and 123-129 (YSFISSS).

The protein belongs to the bacterial CoaD family. Homohexamer. It depends on Mg(2+) as a cofactor.

It localises to the cytoplasm. It carries out the reaction (R)-4'-phosphopantetheine + ATP + H(+) = 3'-dephospho-CoA + diphosphate. It functions in the pathway cofactor biosynthesis; coenzyme A biosynthesis; CoA from (R)-pantothenate: step 4/5. In terms of biological role, reversibly transfers an adenylyl group from ATP to 4'-phosphopantetheine, yielding dephospho-CoA (dPCoA) and pyrophosphate. The chain is Phosphopantetheine adenylyltransferase from Carboxydothermus hydrogenoformans (strain ATCC BAA-161 / DSM 6008 / Z-2901).